The following is a 400-amino-acid chain: NADPH dehydrogenase 3 (400 aa).

FMN contacts are provided by T38 and Q115. Substrate-binding residues include H192 and N195. The active-site Proton donor is Y197. FMN-binding residues include R244 and R349. Residue Y376 participates in substrate binding.

As to quaternary structure, homodimer or heterodimer with OYE2. It depends on FMN as a cofactor.

It carries out the reaction A + NADPH + H(+) = AH2 + NADP(+). In terms of biological role, flavin-dependent enoate reductase that catalyzes the chemo- and stereoslective hydrogenation of electron-poor alkenes. The enzyme is reduced by NADPH, and oxygen, quinones, and alpha,beta-unsaturated aldehydes and ketones can act as electron acceptors to complete catalytic turnover. The physiological oxidant remains elusive. Has a prooxidant activity, increasing reactive oxygen species (ROS) levels when overexpressed. Formation of OYE2-OYE3 heterodimers contribute to the induction of programmed cell death upon oxidative stress. The protein is NADPH dehydrogenase 3 of Saccharomyces cerevisiae (strain ATCC 204508 / S288c) (Baker's yeast).